Consider the following 150-residue polypeptide: UPF0260 protein CGSHiGG_00425 (150 aa).

The protein belongs to the UPF0260 family.

The sequence is that of UPF0260 protein CGSHiGG_00425 from Haemophilus influenzae (strain PittGG).